The following is a 103-amino-acid chain: L-rhamnose-binding lectin ELEL-1 (103 aa).

The 90-residue stretch at 13–102 (VCEGSSLTIS…KYLELSYDCS (90 aa)) folds into the SUEL-type lectin domain. Disulfide bonds link Cys-14–Cys-45, Cys-23–Cys-101, Cys-56–Cys-88, and Cys-69–Cys-75.

As to quaternary structure, homodimer; disulfide-linked. Not glycosylated.

Its function is as follows. Rhamnose-binding lectin. Also binds alpha-D-melibiose, alpha-D-lactose, beta-D-lactose, methyl-alpha-D-galactopyranoside, methyl-beta-D--galactopyranoside and D-galactose but not D-arabinose, L-fucose, D-glucose, D-mannose, D-maltose, D-sucrose, N-acetyl-D-galactosamine, N-acetyl-D-glucosamine, N-acetyl-D-mannosamine-D-xylose or by glycoproteins orosomucoid, thyroglobulin, ovomucoid and porcine stomach mucin. Shows cation-independent hemagglutinating activity against rabbit and human erythrocytes. Agglutinates cells of Gram-positive bacterial species S.aureus but not those of Gram-negative E.coli. The chain is L-rhamnose-binding lectin ELEL-1 from Echinometra lucunter (Rock-boring urchin).